The primary structure comprises 512 residues: Transactivator/viroplasmin protein (512 aa).

Disordered regions lie at residues 76-123 and 474-512; these read GNER…NPVA and ADSS…IPSI. Residues 476–487 show a composition bias toward polar residues; that stretch reads SSSTSGEQNNVE. The segment covering 499 to 512 has biased composition (basic and acidic residues); that stretch reads YDERSDDHKRIPSI.

The protein belongs to the caulimoviridae viroplasmin family.

The protein resides in the host cytoplasm. Enhances the translation of downstream ORFs on polycistronic mRNAs derived from figwort mosaic virus. This Figwort mosaic virus (strain DxS) (FMV) protein is Transactivator/viroplasmin protein.